A 338-amino-acid polypeptide reads, in one-letter code: Ketol-acid reductoisomerase (NADP(+)) (338 aa).

Residues 2 to 182 (TKMYYEEDTD…GGARAGVLET (181 aa)) form the KARI N-terminal Rossmann domain. NADP(+) contacts are provided by residues 25-28 (YGSQ), serine 51, serine 53, and 83-86 (DELQ). Residue histidine 108 is part of the active site. Glycine 134 lines the NADP(+) pocket. The KARI C-terminal knotted domain maps to 183–330 (TFRTETETDL…SEIRKLYCWN (148 aa)). The Mg(2+) site is built by aspartate 191, glutamate 195, glutamate 227, and glutamate 231. Serine 252 contacts substrate.

The protein belongs to the ketol-acid reductoisomerase family. Requires Mg(2+) as cofactor.

The catalysed reaction is (2R)-2,3-dihydroxy-3-methylbutanoate + NADP(+) = (2S)-2-acetolactate + NADPH + H(+). The enzyme catalyses (2R,3R)-2,3-dihydroxy-3-methylpentanoate + NADP(+) = (S)-2-ethyl-2-hydroxy-3-oxobutanoate + NADPH + H(+). It functions in the pathway amino-acid biosynthesis; L-isoleucine biosynthesis; L-isoleucine from 2-oxobutanoate: step 2/4. The protein operates within amino-acid biosynthesis; L-valine biosynthesis; L-valine from pyruvate: step 2/4. Involved in the biosynthesis of branched-chain amino acids (BCAA). Catalyzes an alkyl-migration followed by a ketol-acid reduction of (S)-2-acetolactate (S2AL) to yield (R)-2,3-dihydroxy-isovalerate. In the isomerase reaction, S2AL is rearranged via a Mg-dependent methyl migration to produce 3-hydroxy-3-methyl-2-ketobutyrate (HMKB). In the reductase reaction, this 2-ketoacid undergoes a metal-dependent reduction by NADPH to yield (R)-2,3-dihydroxy-isovalerate. This Clostridium botulinum (strain Eklund 17B / Type B) protein is Ketol-acid reductoisomerase (NADP(+)).